Reading from the N-terminus, the 125-residue chain is Small ribosomal subunit protein uS12c (125 aa).

This sequence belongs to the universal ribosomal protein uS12 family. Part of the 30S ribosomal subunit.

The protein resides in the plastid. The protein localises to the chloroplast. With S4 and S5 plays an important role in translational accuracy. Located at the interface of the 30S and 50S subunits. The sequence is that of Small ribosomal subunit protein uS12c (rps12) from Tupiella akineta (Green alga).